A 215-amino-acid polypeptide reads, in one-letter code: Small ribosomal subunit protein uS5 (215 aa).

Over residues 1 to 12 (MSGTQRRGGGAG) the composition is skewed to gly residues. Positions 1 to 31 (MSGTQRRGGGAGGERRGRDNRRGQNDRNRNQ) are disordered. The span at 13–31 (GERRGRDNRRGQNDRNRNQ) shows a compositional bias: basic and acidic residues. One can recognise an S5 DRBM domain in the interval 34–97 (YLERVVAINR…EEAKKHFFKV (64 aa)).

The protein belongs to the universal ribosomal protein uS5 family. Part of the 30S ribosomal subunit. Contacts proteins S4 and S8.

Functionally, with S4 and S12 plays an important role in translational accuracy. In terms of biological role, located at the back of the 30S subunit body where it stabilizes the conformation of the head with respect to the body. In Cutibacterium acnes (strain DSM 16379 / KPA171202) (Propionibacterium acnes), this protein is Small ribosomal subunit protein uS5.